Consider the following 308-residue polypeptide: MSRRKVFLVGDGRVGSTFANDLLQNVRIDELVICDVVKKITEGDALDLEDLAPFVGQCTVKSGDYSDAKDADIAVITAGAARKPGMTRLDLVKTNVKILESIIKPIVESGFNGIFVVSANPVDILTTLTQKLSGFPKNKVIGTGTSLDTARLRVALSHKTGVNVDHIDAYVLGEHGDTSFENFDEAIIDHKPLRSYKELDEETLVELETDVRKKGGKIIANKGATFYGVAMCLTQICKAILENKALVMPLSAPMTGEYGIHDLYIGSPAVVTANGISDVIELHLSEDENKKMAYSAAKMKEVVDGIDL.

NAD(+) is bound by residues V14, D35, Y65, and 79-80 (GA). A substrate-binding site is contributed by R88. S101 provides a ligand contact to NAD(+). Residue 120–123 (NPVD) participates in substrate binding. T143 lines the NAD(+) pocket. 148 to 151 (DTAR) lines the substrate pocket. The active-site Proton acceptor is the H175. Substrate is bound at residue T225.

This sequence belongs to the LDH/MDH superfamily. LDH family. Homotetramer.

The protein resides in the cytoplasm. It carries out the reaction (S)-lactate + NAD(+) = pyruvate + NADH + H(+). Its pathway is fermentation; pyruvate fermentation to lactate; (S)-lactate from pyruvate: step 1/1. Its function is as follows. Catalyzes the conversion of lactate to pyruvate. In Lactobacillus johnsonii (strain CNCM I-12250 / La1 / NCC 533), this protein is L-lactate dehydrogenase 2.